The sequence spans 235 residues: Lipoprotein-releasing system ATP-binding protein LolD (235 aa).

One can recognise an ABC transporter domain in the interval Leu-13–Ile-235. Gly-49 to Ser-56 serves as a coordination point for ATP.

Belongs to the ABC transporter superfamily. Lipoprotein translocase (TC 3.A.1.125) family. The complex is composed of two ATP-binding proteins (LolD) and two transmembrane proteins (LolC and LolE).

It is found in the cell inner membrane. Part of the ABC transporter complex LolCDE involved in the translocation of mature outer membrane-directed lipoproteins, from the inner membrane to the periplasmic chaperone, LolA. Responsible for the formation of the LolA-lipoprotein complex in an ATP-dependent manner. This is Lipoprotein-releasing system ATP-binding protein LolD from Blochmanniella floridana.